The following is a 26-amino-acid chain: Aldehyde dehydrogenase beta chain (26 aa).

As to quaternary structure, heterotrimer composed of an alpha, a beta and a gamma chain. It depends on FAD as a cofactor.

The catalysed reaction is an aldehyde + a quinone + H2O = a quinol + a carboxylate + H(+). The sequence is that of Aldehyde dehydrogenase beta chain from Amycolatopsis methanolica.